We begin with the raw amino-acid sequence, 423 residues long: Amino sugar nitrososynthase RubN8 (423 aa).

The protein belongs to the acyl-CoA dehydrogenase family. FAD is required as a cofactor.

It participates in antibiotic biosynthesis. Its function is as follows. Nitrososynthase involved in the biosynthesis of rubradirin, an ansamycin antibiotic. In vitro, catalyzes the double-oxidation of TDP-L-epi-vancosamine to TDP-L-epi-vancosonitrose. In vivo, probably catalyzes the formation of D-rubranitrose, the nitro sugar moiety of rubradirin. The polypeptide is Amino sugar nitrososynthase RubN8 (Streptomyces rubradiris (Streptomyces achromogenes subsp. rubradiris)).